A 193-amino-acid polypeptide reads, in one-letter code: Small ribosomal subunit protein eS1 (193 aa).

The protein belongs to the eukaryotic ribosomal protein eS1 family.

The chain is Small ribosomal subunit protein eS1 from Sulfurisphaera tokodaii (strain DSM 16993 / JCM 10545 / NBRC 100140 / 7) (Sulfolobus tokodaii).